The primary structure comprises 141 residues: Hemoglobin subunit alpha-A (141 aa).

Residues 1 to 141 form the Globin domain; the sequence is VLNAGDKANV…VGTVLTSKYR (141 aa). His-58 is a binding site for O2. A heme b-binding site is contributed by His-87.

This sequence belongs to the globin family. In terms of assembly, heterotetramer of two alpha chains and two beta chains. As to expression, red blood cells.

Its function is as follows. Involved in oxygen transport from the lung to the various peripheral tissues. The polypeptide is Hemoglobin subunit alpha-A (HBAA) (Chrysemys picta bellii (Western painted turtle)).